Reading from the N-terminus, the 32-residue chain is Conotoxin pr6b (32 aa).

Pro-6, Pro-13, Pro-20, and Pro-29 each carry 4-hydroxyproline. 3 cysteine pairs are disulfide-bonded: Cys-7–Cys-18, Cys-14–Cys-23, and Cys-17–Cys-31.

In terms of tissue distribution, expressed by the venom duct.

The protein resides in the secreted. Intraperitoneal injection into fish (0.5 nmol) provokes vertical suspension and paralysis after 6 minutes. This chain is Conotoxin pr6b, found in Conus parius (Cone snail).